The sequence spans 112 residues: ATP synthase subunit c (112 aa).

Helical transmembrane passes span 36-56 (FSVL…AIGM) and 81-101 (MFIA…IALI).

Belongs to the ATPase C chain family. In terms of assembly, F-type ATPases have 2 components, F(1) - the catalytic core - and F(0) - the membrane proton channel. F(1) has five subunits: alpha(3), beta(3), gamma(1), delta(1), epsilon(1). F(0) has three main subunits: a(1), b(2) and c(10-14). The alpha and beta chains form an alternating ring which encloses part of the gamma chain. F(1) is attached to F(0) by a central stalk formed by the gamma and epsilon chains, while a peripheral stalk is formed by the delta and b chains.

The protein localises to the cell inner membrane. Its function is as follows. F(1)F(0) ATP synthase produces ATP from ADP in the presence of a proton or sodium gradient. F-type ATPases consist of two structural domains, F(1) containing the extramembraneous catalytic core and F(0) containing the membrane proton channel, linked together by a central stalk and a peripheral stalk. During catalysis, ATP synthesis in the catalytic domain of F(1) is coupled via a rotary mechanism of the central stalk subunits to proton translocation. Functionally, key component of the F(0) channel; it plays a direct role in translocation across the membrane. A homomeric c-ring of between 10-14 subunits forms the central stalk rotor element with the F(1) delta and epsilon subunits. In Campylobacter jejuni (strain RM1221), this protein is ATP synthase subunit c.